The following is a 45-amino-acid chain: Large ribosomal subunit protein bL34 (45 aa).

Positions 1–45 (MTKRTFGGTSRKRKRVSGFRVRMRTHTGRSVIRSRRKKGRSRIAV) are disordered. The segment covering 10 to 45 (SRKRKRVSGFRVRMRTHTGRSVIRSRRKKGRSRIAV) has biased composition (basic residues).

It belongs to the bacterial ribosomal protein bL34 family.

The polypeptide is Large ribosomal subunit protein bL34 (Prochlorococcus marinus (strain SARG / CCMP1375 / SS120)).